Here is a 646-residue protein sequence, read N- to C-terminus: Lipoteichoic acid synthase (646 aa).

Residues 1 to 7 lie on the Cytoplasmic side of the membrane; sequence MSSQKKK. Residues 8–28 form a helical membrane-spanning segment; the sequence is ISLFAFFLLTVITITLKTYFS. Topologically, residues 29–43 are extracellular; sequence YYVDFSLGVKGLVQN. The chain crosses the membrane as a helical span at residues 44-64; the sequence is LILLMNPYSLVALVLSVFLFF. At 65 to 68 the chain is on the cytoplasmic side; it reads KGKK. The chain crosses the membrane as a helical span at residues 69–89; that stretch reads AFWFMFIGGFLLTFLLYANVV. At 90-119 the chain is on the extracellular side; the sequence is YFRFFSDFLTFSTLNQVGNVESMGGAVSAS. Residues 120 to 140 traverse the membrane as a helical segment; sequence FKWYDFVYFIDTLVYLFILIF. Over 141-153 the chain is Cytoplasmic; the sequence is KTKWLDTKAFSKK. The helical transmembrane segment at 154–174 threads the bilayer; it reads FVPVVMAASVALFFLNLAFAE. At 175 to 646 the chain is on the extracellular side; the sequence is TDRPELLTRT…ETGPKANSKK (472 aa). The Mn(2+) site is built by Glu-255 and Thr-300. The active site involves Thr-300. His-416 is a binding site for substrate. Positions 475 and 476 each coordinate Mn(2+). The segment covering 623-638 has biased composition (basic and acidic residues); sequence NPDFKKVNPSKYKYET. The tract at residues 623-646 is disordered; sequence NPDFKKVNPSKYKYETGPKANSKK.

Belongs to the LTA synthase family. Post-translationally, proteolytically cleaved.

It localises to the cell membrane. The protein localises to the secreted. It functions in the pathway cell wall biogenesis; lipoteichoic acid biosynthesis. Functionally, catalyzes the polymerization of lipoteichoic acid (LTA) polyglycerol phosphate, a reaction that presumably uses phosphatidylglycerol (PG) as substrate. Is required for staphylococcal growth and cell division process. The chain is Lipoteichoic acid synthase (ltaS) from Staphylococcus aureus (strain USA300).